The chain runs to 430 residues: Probable proton-coupled zinc antiporter SLC30A4 (430 aa).

The Cytoplasmic portion of the chain corresponds to 1–113; it reads MAGPGAWKRL…LLKQRKVKTR (113 aa). Position 36 is a phosphoserine (S36). The helical transmembrane segment at 114–134 threads the bilayer; that stretch reads LTIAAVLYLLFMIGELVGGYM. Topologically, residues 135 to 143 are lumenal; it reads ANSLAIMTD. The chain crosses the membrane as a helical span at residues 144–164; sequence ALHMLTDLSAIILTLLALWLS. Zn(2+) is bound by residues H146 and D150. Over 165 to 178 the chain is Cytoplasmic; the sequence is SKSPTRRFTFGFHR. Residues 179-199 form a helical membrane-spanning segment; sequence LEVLSAMISVMLVYVLMGFLL. At 200–216 the chain is on the lumenal side; it reads YEAVQRTIHMNYEINGD. The helical transmembrane segment at 217–237 threads the bilayer; it reads VMLITAAVGVAVNVIMGFLLN. Residues 238 to 275 lie on the Cytoplasmic side of the membrane; it reads QSGHHHSHAHSHSLPSNSPSMVSSGHNHGQDSLAVRAA. A zinc binding region spans residues 240–265; that stretch reads GHHHSHAHSHSLPSNSPSMVSSGHNH. Positions 245 to 264 are disordered; it reads HAHSHSLPSNSPSMVSSGHN. Positions 249-263 are enriched in low complexity; it reads HSLPSNSPSMVSSGH. A helical membrane pass occupies residues 276–296; sequence FVHALGDLVQSVGVLIAAYII. Residues H278 and D282 each contribute to the Zn(2+) site. At 297–311 the chain is on the lumenal side; that stretch reads RFKPEYKIADPICTY. The chain crosses the membrane as a helical span at residues 312-332; that stretch reads IFSLLVAFTTFRIIWDTVVII. At 333–430 the chain is on the cytoplasmic side; that stretch reads LEGVPSHLNV…TCANCHSSST (98 aa).

This sequence belongs to the cation diffusion facilitator (CDF) transporter (TC 2.A.4) family. SLC30A subfamily. Homodimerization could regulate efficiency for zinc transport. Interacts with TMEM163. In terms of tissue distribution, widely expressed. Highly expressed in the brain and in mammary epithelial cell lines.

It is found in the endosome membrane. It localises to the late endosome membrane. The protein localises to the lysosome membrane. The catalysed reaction is Zn(2+)(in) + 2 H(+)(out) = Zn(2+)(out) + 2 H(+)(in). Functionally, probable proton-coupled zinc ion antiporter mediating zinc import from cytoplasm potentially into the endocytic compartment. Controls zinc deposition in milk. This is Probable proton-coupled zinc antiporter SLC30A4 from Mus musculus (Mouse).